The sequence spans 372 residues: Queuine tRNA-ribosyltransferase (372 aa).

Residue D92 is the Proton acceptor of the active site. Residues 92 to 96, D146, Q188, and G215 each bind substrate; that span reads DSGGF. Residues 246–252 are RNA binding; the sequence is GIGTLRE. Catalysis depends on D265, which acts as the Nucleophile. The segment at 270–274 is RNA binding; important for wobble base 34 recognition; it reads TRLGR. 4 residues coordinate Zn(2+): C303, C305, C308, and H334.

It belongs to the queuine tRNA-ribosyltransferase family. In terms of assembly, homodimer. Within each dimer, one monomer is responsible for RNA recognition and catalysis, while the other monomer binds to the replacement base PreQ1. Requires Zn(2+) as cofactor.

It carries out the reaction 7-aminomethyl-7-carbaguanine + guanosine(34) in tRNA = 7-aminomethyl-7-carbaguanosine(34) in tRNA + guanine. The protein operates within tRNA modification; tRNA-queuosine biosynthesis. Functionally, catalyzes the base-exchange of a guanine (G) residue with the queuine precursor 7-aminomethyl-7-deazaguanine (PreQ1) at position 34 (anticodon wobble position) in tRNAs with GU(N) anticodons (tRNA-Asp, -Asn, -His and -Tyr). Catalysis occurs through a double-displacement mechanism. The nucleophile active site attacks the C1' of nucleotide 34 to detach the guanine base from the RNA, forming a covalent enzyme-RNA intermediate. The proton acceptor active site deprotonates the incoming PreQ1, allowing a nucleophilic attack on the C1' of the ribose to form the product. After dissociation, two additional enzymatic reactions on the tRNA convert PreQ1 to queuine (Q), resulting in the hypermodified nucleoside queuosine (7-(((4,5-cis-dihydroxy-2-cyclopenten-1-yl)amino)methyl)-7-deazaguanosine). This is Queuine tRNA-ribosyltransferase from Synechococcus sp. (strain CC9605).